Here is a 516-residue protein sequence, read N- to C-terminus: Cytochrome P450 monooxygenase asR2 (516 aa).

Residues 9 to 29 (LNSITFSLLVFLGFVGVSQLI) form a helical membrane-spanning segment. N-linked (GlcNAc...) asparagine glycans are attached at residues Asn-248 and Asn-273. Position 461 (Cys-461) interacts with heme.

The protein belongs to the cytochrome P450 family. Heme serves as cofactor.

It localises to the membrane. It participates in secondary metabolite biosynthesis; terpenoid biosynthesis. Functionally, cytochrome P450 monooxygenase; part of the gene cluster that mediates the biosynthesis of xenovulene A, an unusual meroterpenoid that has potent inhibitory effects on the human gamma-aminobutyrate A (GABAA) benzodiazepine receptor. The first step of xenovulene A biosynthesis is the biosynthesis of 3-methylorcinaldehyde performed by the non-reducing polyketide synthase aspks1. The salicylate hydroxylase asL1 then catalyzes the oxidative dearomatization of 3-methylorcinaldehyde to yield a dearomatized hydroxycyclohexadione. The 2-oxoglutarate-dependent dioxygenase asL3 further catalyzes the oxidative ring expansion to provide the first tropolone metabolite. The cytochrome P450 monooxygenase asR2 allows the synthesis of tropolone hemiacetal. In parallel, a previously unrecognised class of terpene cyclase, asR6, produces alpha-humulene from farnesylpyrophosphate (FPP). The putative Diels-Alderase asR5 probably catalyzes the formation of the tropolone-humulene skeleton by linking humulene and the polyketide moiety. Oxidative-ring contractions catalyzed by asL4 and asL6 then processively remove carbon atoms from the polyketide to yield xenovulene A. The polypeptide is Cytochrome P450 monooxygenase asR2 (Sarocladium schorii (Acremonium strictum (strain IMI 501407))).